We begin with the raw amino-acid sequence, 488 residues long: ATP synthase subunit beta (488 aa).

164–171 (GGAGVGKT) lines the ATP pocket.

It belongs to the ATPase alpha/beta chains family. F-type ATPases have 2 components, CF(1) - the catalytic core - and CF(0) - the membrane proton channel. CF(1) has five subunits: alpha(3), beta(3), gamma(1), delta(1), epsilon(1). CF(0) has four main subunits: a(1), b(1), b'(1) and c(9-12).

It localises to the cellular thylakoid membrane. It catalyses the reaction ATP + H2O + 4 H(+)(in) = ADP + phosphate + 5 H(+)(out). Produces ATP from ADP in the presence of a proton gradient across the membrane. The catalytic sites are hosted primarily by the beta subunits. The chain is ATP synthase subunit beta from Prochlorococcus marinus (strain MIT 9313).